We begin with the raw amino-acid sequence, 247 residues long: Orotidine 5'-phosphate decarboxylase (247 aa).

Substrate-binding positions include Asp-21, Lys-43, 70–79 (DMKFHDIPNT), Thr-129, Arg-190, Gln-199, Gly-219, and Arg-220. Lys-72 acts as the Proton donor in catalysis.

Belongs to the OMP decarboxylase family. Type 1 subfamily. Homodimer.

It carries out the reaction orotidine 5'-phosphate + H(+) = UMP + CO2. The protein operates within pyrimidine metabolism; UMP biosynthesis via de novo pathway; UMP from orotate: step 2/2. Functionally, catalyzes the decarboxylation of orotidine 5'-monophosphate (OMP) to uridine 5'-monophosphate (UMP). The protein is Orotidine 5'-phosphate decarboxylase of Chromobacterium violaceum (strain ATCC 12472 / DSM 30191 / JCM 1249 / CCUG 213 / NBRC 12614 / NCIMB 9131 / NCTC 9757 / MK).